A 240-amino-acid polypeptide reads, in one-letter code: Uridylate kinase (240 aa).

Lysine 12–glycine 15 contributes to the ATP binding site. Glycine 54 provides a ligand contact to UMP. ATP-binding residues include glycine 55 and arginine 59. Residues aspartate 74 and threonine 135–threonine 142 contribute to the UMP site. The ATP site is built by threonine 162, tyrosine 168, and aspartate 171.

This sequence belongs to the UMP kinase family. In terms of assembly, homohexamer.

It is found in the cytoplasm. The enzyme catalyses UMP + ATP = UDP + ADP. The protein operates within pyrimidine metabolism; CTP biosynthesis via de novo pathway; UDP from UMP (UMPK route): step 1/1. Inhibited by UTP. In terms of biological role, catalyzes the reversible phosphorylation of UMP to UDP. The polypeptide is Uridylate kinase (Xanthomonas euvesicatoria pv. vesicatoria (strain 85-10) (Xanthomonas campestris pv. vesicatoria)).